The following is a 271-amino-acid chain: Phosphatidylglycerol--prolipoprotein diacylglyceryl transferase (271 aa).

A run of 7 helical transmembrane segments spans residues Ile-21–Ala-41, Leu-60–Tyr-80, Val-95–Trp-115, Phe-124–Leu-144, Ser-176–Ile-196, Gly-203–Val-223, and Leu-230–Gly-250. Arg-143 is a binding site for a 1,2-diacyl-sn-glycero-3-phospho-(1'-sn-glycerol).

This sequence belongs to the Lgt family.

It is found in the cell inner membrane. It catalyses the reaction L-cysteinyl-[prolipoprotein] + a 1,2-diacyl-sn-glycero-3-phospho-(1'-sn-glycerol) = an S-1,2-diacyl-sn-glyceryl-L-cysteinyl-[prolipoprotein] + sn-glycerol 1-phosphate + H(+). It participates in protein modification; lipoprotein biosynthesis (diacylglyceryl transfer). Functionally, catalyzes the transfer of the diacylglyceryl group from phosphatidylglycerol to the sulfhydryl group of the N-terminal cysteine of a prolipoprotein, the first step in the formation of mature lipoproteins. The chain is Phosphatidylglycerol--prolipoprotein diacylglyceryl transferase from Vibrio vulnificus (strain CMCP6).